Reading from the N-terminus, the 478-residue chain is MSPQTETKASAGFKAGVKDYKLNYYTPEYETKDTDILAAFRVTPQPGVPPEEAGAAVAAESSTGTWTTVWTDGLTSLDRYKGRCYHIEPVAGEENQFIAYIAYPLDLFEEGSVTNMFTSIVGNVFGFKALRALRLEDLRIPPAYSKTFQGPPHGIQVERDKLNKYGRPLLGCTIKPKLGLSAKNYGRAVYECLRGGLDFTKDDENVNSQPFMRWRDRFLFCAEAIYKAQAETGEIKGHYLNATAGTCEEMIKRAVFARELGVPIVMHDYLTGGFTANTSLAYYCRDNGLLLHIHRAMHAVIDRQKNHGMHFRVLAKALRMSGGDHVHSGTVVGKLEGEREMTLGFVDLLRDDFIEKDRSRGIFFTQDWVSMPGVLPVASGGIHVWHMPALTEIFGDDSVLQFGGGTLGHPWGNAPGAVANRVALEACVKARNEGRDLAREGNEIIREACNWSPELAAACEVWKEIKFEYEPVDKLDVK.

The propeptide occupies 1-2 (MS). Pro3 carries the post-translational modification N-acetylproline. Lys14 is modified (N6,N6,N6-trimethyllysine). Substrate contacts are provided by Asn123 and Thr173. The Proton acceptor role is filled by Lys175. Lys177 is a substrate binding site. Residues Lys201, Asp203, and Glu204 each coordinate Mg(2+). Lys201 is modified (N6-carboxylysine). Catalysis depends on His294, which acts as the Proton acceptor. Residues Arg295, His327, and Ser379 each contribute to the substrate site.

The protein belongs to the RuBisCO large chain family. Type I subfamily. Heterohexadecamer of 8 large chains and 8 small chains; disulfide-linked. The disulfide link is formed within the large subunit homodimers. Requires Mg(2+) as cofactor. In terms of processing, the disulfide bond which can form in the large chain dimeric partners within the hexadecamer appears to be associated with oxidative stress and protein turnover.

It localises to the plastid. It is found in the chloroplast. It carries out the reaction 2 (2R)-3-phosphoglycerate + 2 H(+) = D-ribulose 1,5-bisphosphate + CO2 + H2O. It catalyses the reaction D-ribulose 1,5-bisphosphate + O2 = 2-phosphoglycolate + (2R)-3-phosphoglycerate + 2 H(+). Its function is as follows. RuBisCO catalyzes two reactions: the carboxylation of D-ribulose 1,5-bisphosphate, the primary event in carbon dioxide fixation, as well as the oxidative fragmentation of the pentose substrate in the photorespiration process. Both reactions occur simultaneously and in competition at the same active site. This chain is Ribulose bisphosphate carboxylase large chain, found in Lemna minor (Common duckweed).